The sequence spans 1641 residues: MEGMALYLVAALLIGFPGSSHGALYTLITPGVLRTDTEEQILVEAHGDNTPKQLDIFVHDFPRKQKILFQKRVDMNPAGDMLVTPTIKIPAEEVSKDSRQNQYVVVQVTGPQVRLEKVVLLSYQSGFVFIQTDKGIYTPGSPVLYRVFSMDHNMRQMDKTVVVEFQTPEGIVVSSNRIDLNFTRPYNLPELGSLGTWKIVAKYEHSPENYTAYFDVRKYVLPSFEVHLQPSEKSFYIDGNENFHVSITARYLYGEEVEGVAFVLFGVKIDGAKKSIPDSLTRIPILDGDGEATLKRDTLRSRFPNLNELVGHTLYASVTVITESGSDMVATEQSGIHIVTSPYQIYFTKTPKYFKPGMPYELTVYVTNPDGSPAAKVPVVSEAIHSEGTTLSDGTAKLILNTPLDTQSLLITVRTNHGDLPRERQATKSMTATAYQTQGGSGNYLHVAITSTEIKPGDNLPVNFNVRGNANSLNQVKYFTYLVGRQPKGAGQNLVAMNLRITPDLIPSFRFVAYYQVGNNEIVADSVWVDVKDTCMGTLVVKGASLTDNQIHMPGAAMKIKLEGDPGAQVGLVAVDKAVYVLNDKYKISQAKIWDTIEKSDFGCTAGGGQNNLGVFEDAGLALTTSTNLNTKQRSDTKCPQPANRRRRSSVLLLDSKASKAAQFQDQDLRKCCEDSMHENPMGYTCEKRAKYIQEGDACKAAFLECCRYIKGILDENQWESGLFLPRNDNEDGFIQDSDIIPRTDFPKSWLWHTVQLTEQPNSNGISSKTMSIYLKESITTWEVLAVSFTPTKGICVAEPYEIKVMKDFFIDLRVPYSVVRKEQVEIRAVLYNYAGRDIYVRVELLYNPAFCSASTEEQRYRQQFTIKALSSRAVPFVIVPLQQGLHDIEVRASVQGWESVSDGVKKKLKVVPEGVQKCIVTIIKLDPRAKGVDGTQREVVKARKLDDKVPDTEIETKITIQADPVAQIIENSIDGSKLNHLIITPSGCGEQNMIRMTAPVIATYYLDTTEQWETLGRNHRNEAVKQIMTGYAQQMVYKKANHSYAAFTNRASSTWLTAYVVKVFAMATKMVAGISHEIICGGVRWLILNRQQPDGAFKENAPVLSGTMQGGIQGDESEVTVTAFTLVALLESKTICNDSVNSLDSSIKKATDYLLKKYEKLQRPYTTALTAYALAAADRLNDDRVLMAASTGKNRWEEYNAHTHNVEGTSYALLALLKMKKFDQTGPIVRWLTDQNFYGGTYGQTQATVMLFQALAEYKIQMPTHKDLNLDIIIKLPERELPLHYRLDATNAILARTAETKLNQDFTVSASGDGTATMTILTVYNAQLQEKANVCNKFHLDVSVENIHLNFKHAKGAKGALMLKICMRYLGEVDSTMTIIDISMLTGFLPDAEDLTRLSEGVDRYISRYEVDNNMAQKVAVIIYLDKVSHSEDECLQFKILKHFEVGFIQPGSVKVYSYYNLDEQCTKFYHPDKGTGLLNKICVGNICRCAAETCSLLSQQEKIDLPLRIQKACASNVDYVYKTKLLRIEEKDGYDIYVMDVLEVIKPGTDENPQANARQYISQRKCQEALNLNVNDDYLIWGLRSDLWPMKDKFSYLITKNTWIERWPHEDECQDEEFQNLCLDFAHLSNILTIFGCPT.

A signal peptide spans 1 to 22 (MEGMALYLVAALLIGFPGSSHG). N-linked (GlcNAc...) asparagine glycans are attached at residues Asn-181 and Asn-209. 4 residues coordinate Mg(2+): Pro-507, Asp-530, Val-531, and Asp-533. Intrachain disulfides connect Cys-535/Cys-796, Cys-604/Cys-639, Cys-672/Cys-699, Cys-673/Cys-706, Cys-686/Cys-707, Cys-852/Cys-1491, Cys-1336/Cys-1467, Cys-1367/Cys-1436, Cys-1484/Cys-1489, Cys-1496/Cys-1568, Cys-1515/Cys-1639, and Cys-1615/Cys-1624. A propeptide spanning residues 645–728 (RRRRSSVLLL…WESGLFLPRN (84 aa)) is cleaved from the precursor. The tract at residues 649 to 727 (SSVLLLDSKA…QWESGLFLPR (79 aa)) is C3a-like domain. Positions 672–707 (CCEDSMHENPMGYTCEKRAKYIQEGDACKAAFLECC) constitute an Anaphylatoxin-like domain. A factor B binding site region spans residues 731 to 742 (EDGFIQDSDIIP). Residues 981-1259 (HLIITPSGCG…VMLFQALAEY (279 aa)) constitute a propeptide that is removed on maturation. Positions 981-1259 (HLIITPSGCG…VMLFQALAEY (279 aa)) are C3d-like domain. A cross-link (isoglutamyl cysteine thioester (Cys-Gln)) is located at residues 989-992 (CGEQ). A factor H binding site region spans residues 1186 to 1249 (VLMAASTGKN…GGTYGQTQAT (64 aa)). In terms of domain architecture, NTR spans 1496 to 1639 (CSLLSQQEKI…LSNILTIFGC (144 aa)).

The protein belongs to the venom complement C3 homolog family. As to quaternary structure, heterotrimer of alpha, beta and gamma chains; disulfide-linked. May be active with factor B in the presence of factor D. Post-translationally, first processed by the removal of 4 Arg residues by furin-type protease, forming two chains, alpha and gamma/beta precursor, linked by a disulfide bond. Probably, a cobrin-like protease cleaves the C3a-like domain and then the C3d-like domain, generating the mature venom factor (OVF). In terms of processing, the beta chain is not glycosylated. As to expression, expressed by the venom gland.

It is found in the secreted. In terms of biological role, complement-activating protein in cobra venom. It is a structural and functional analog of complement component C3b, the activated form of C3. It binds factor B (CFB), which is subsequently cleaved by factor D (CFD) to form the bimolecular complex OVF/Bb. OVF/Bb is a C3/C5 convertase that cleaves both complement components C3 and C5. Structurally, it resembles the C3b degradation product C3c, which is not able to form a C3/C5 convertase. Unlike C3b/Bb, OVF/Bb is a stable complex and completely resistant to the actions of complement regulatory factors H (CFH) and I (CFI). Therefore, OVF continuously activates complement. As a result, OVF exhibits complement-depleting activity. The sequence is that of Ophiophagus venom factor from Ophiophagus hannah (King cobra).